We begin with the raw amino-acid sequence, 382 residues long: MDLITTTAELASVCARLANYPVVTVDTEFLRETTYYPLLCVVQMASPDEAVVVDALAEGIDLKPFFDLMSNERVLKVFHAARQDIEIVWHQAGIIPHPIFDTQVAAMVLGYGDSIAYDALVERVNGHRPDKTHRFTDWSRRPLTKDQLEYAVADVTHLRDVFAALDADLKKRGRGDWVSEEMEVLTSPKTYDFHPERAWERLKTRVRKPKDLAVMMEVAAWREQEAQSRNIPRSRVLKDDAVGDIAIHAPATPERLATLRSLPKGFEKSQWGADIVAAVQRGLARDPRELPKIEKPRNNTNGAATVELLKVLLRMTSERHAVASKVIATVDDLERIAADDAADVGALRGWRRELFGEAALALKHGQLALAIEKGRVVRVERS.

A 3'-5' exonuclease domain is found at 4-169 (ITTTAELASV…DVFAALDADL (166 aa)). The HRDC domain occupies 208–289 (KPKDLAVMME…QRGLARDPRE (82 aa)).

Belongs to the RNase D family. A divalent metal cation is required as a cofactor.

The protein localises to the cytoplasm. It catalyses the reaction Exonucleolytic cleavage that removes extra residues from the 3'-terminus of tRNA to produce 5'-mononucleotides.. In terms of biological role, exonuclease involved in the 3' processing of various precursor tRNAs. Initiates hydrolysis at the 3'-terminus of an RNA molecule and releases 5'-mononucleotides. This is Ribonuclease D from Nitrobacter hamburgensis (strain DSM 10229 / NCIMB 13809 / X14).